We begin with the raw amino-acid sequence, 245 residues long: MSQSTSVLRRNGFTFKQFFVAHDRCAMKVGTDGILLGAWAPVAGVKRCLDIGAGSGLLALMLAQRTSDSVIIDAVELESEAAAQAQENINQSPWAERINVHTADIQQWLTQQTVRFDLIISNPPYYQQGVECAIPQREQARYTTTLDHPSLLTCAAECITEEGFFCVVLPEQIGNGFTELALSMGWHLRLRTDVAENEARLPHRVLLAFSPQAGECFSDRLVIRGPDQNYSEAYTALTQAFYLFM.

Belongs to the methyltransferase superfamily. tRNA (adenine-N(6)-)-methyltransferase family.

The protein resides in the cytoplasm. It catalyses the reaction adenosine(37) in tRNA1(Val) + S-adenosyl-L-methionine = N(6)-methyladenosine(37) in tRNA1(Val) + S-adenosyl-L-homocysteine + H(+). Functionally, specifically methylates the adenine in position 37 of tRNA(1)(Val) (anticodon cmo5UAC). The sequence is that of tRNA1(Val) (adenine(37)-N6)-methyltransferase from Shigella boydii serotype 18 (strain CDC 3083-94 / BS512).